Consider the following 365-residue polypeptide: Protein RecA (365 aa).

73–80 (GPESSGKT) provides a ligand contact to ATP.

It belongs to the RecA family.

Its subcellular location is the cytoplasm. In terms of biological role, can catalyze the hydrolysis of ATP in the presence of single-stranded DNA, the ATP-dependent uptake of single-stranded DNA by duplex DNA, and the ATP-dependent hybridization of homologous single-stranded DNAs. It interacts with LexA causing its activation and leading to its autocatalytic cleavage. The polypeptide is Protein RecA (Prochlorococcus marinus (strain MIT 9312)).